Consider the following 298-residue polypeptide: MTVSNSNGLPDIVTVQKRLYPLIFTEIVSEQPTKQPVATAYGFKAVPEADDGSGWTQFGFRLDRWYAQVESSKMKTEISLETLQDMQALGVSNSVIVDSLADQIADEINTSIIGALNSISTVGAALTLTGNTDFEKGQDLYTKVHLAASEIEKTTGCKGTYVVAGGKCFGYLTGCGVVQRVGESDVYKAWSGLYIVHDKYATSDYVTVGVKKDMGDYEISSLVFSPYQFDQANDGAIAYQYKGTDPKSFHPVYGVIARYALTVPPLEDNQTGAVEIDWSNLGALANSSKLSYTYAVTV.

The protein belongs to the Tevenvirinae capsid vertex family. As to quaternary structure, homopentamer. Interacts with the portal protein. Interacts with the major capsid protein that forms hexamers.

The protein resides in the virion. Capsid protein that self-associates to form pentons, building the capsid in association with hexamers of the major capsid protein and one dodecamer of the portal protein. This is Capsid vertex protein from Vibrio parahaemolyticus (KVP40).